A 204-amino-acid chain; its full sequence is Large ribosomal subunit protein uL4 (204 aa).

The segment at 53–73 is disordered; sequence AFVSGGGKKPWRQKGRGGARA.

Belongs to the universal ribosomal protein uL4 family. As to quaternary structure, part of the 50S ribosomal subunit.

Functionally, one of the primary rRNA binding proteins, this protein initially binds near the 5'-end of the 23S rRNA. It is important during the early stages of 50S assembly. It makes multiple contacts with different domains of the 23S rRNA in the assembled 50S subunit and ribosome. Forms part of the polypeptide exit tunnel. The sequence is that of Large ribosomal subunit protein uL4 from Campylobacter concisus (strain 13826).